Here is a 651-residue protein sequence, read N- to C-terminus: Intraflagellar transport protein 70A (651 aa).

7 TPR repeats span residues 8 to 41 (DGEY…HTKS), 42 to 75 (RAAL…HPEV), 140 to 173 (PDYD…LGYQ), 175 to 207 (DLAY…GIRE), 379 to 410 (VTKQ…EKYI), 411 to 443 (PVLM…CNEH), and 445 to 478 (TWKL…HYEN). Residues 494-521 (YIMTSQNEEAEELMRKIEKEEEQISYDD) are a coiled coil. The TPR 8 repeat unit spans residues 530–563 (CIVNLVIGTLYCAKGNYDFGISRVIKSLEPYNKK).

This sequence belongs to the TTC30/dfy-1/fleer family. In terms of tissue distribution, localizes to the cilia of many ciliated epithelial cell types including pronephric cells, olfactory placode, the brain ventricle and lateral line organs.

The protein localises to the cell projection. It localises to the cilium. Functionally, plays a role in anterograde intraflagellar transport (IFT), the process by which cilia precursors are transported from the base of the cilium to the site of their incorporation at the tip. Required for polyglutamylation of axonemal tubulin, which is a prerequisite for correct assembly of cilia and for normal cilia beat amplitude. Does not seem to be required for neuronal microtubule polyglutamylation. The sequence is that of Intraflagellar transport protein 70A (ift70a) from Danio rerio (Zebrafish).